The primary structure comprises 64 residues: Lingual antimicrobial peptide (64 aa).

Positions Met-1–Gly-24 are cleaved as a signal peptide. Intrachain disulfides connect Cys-31-Cys-60, Cys-38-Cys-53, and Cys-43-Cys-61.

It belongs to the beta-defensin family. LAP/TAP subfamily. In many of the exposed epithelial surfaces including conjunctivae, bronchi, colon, urinary tract and trachea.

It is found in the secreted. Its function is as follows. Shows a broad spectrum of antibacterial and antifungal activities. The protein is Lingual antimicrobial peptide (LAP) of Bos taurus (Bovine).